The sequence spans 361 residues: Ribosomal RNA large subunit methyltransferase M (361 aa).

S-adenosyl-L-methionine-binding positions include S190, 223–226, D242, D262, and D280; that span reads CPGG. K309 acts as the Proton acceptor in catalysis.

It belongs to the class I-like SAM-binding methyltransferase superfamily. RNA methyltransferase RlmE family. RlmM subfamily. As to quaternary structure, monomer.

The protein resides in the cytoplasm. The enzyme catalyses cytidine(2498) in 23S rRNA + S-adenosyl-L-methionine = 2'-O-methylcytidine(2498) in 23S rRNA + S-adenosyl-L-homocysteine + H(+). Catalyzes the 2'-O-methylation at nucleotide C2498 in 23S rRNA. This is Ribosomal RNA large subunit methyltransferase M from Actinobacillus pleuropneumoniae serotype 7 (strain AP76).